The sequence spans 241 residues: Venom nerve growth factor 2 (241 aa).

The N-terminal stretch at 1–18 (MSMLCYTLITAFLIGIWA) is a signal peptide. The propeptide occupies 19-125 (APKSEDNVPL…SLNRNIRAKR (107 aa)). Positions 47–67 (GLKTSRNTDQRHPAPQKAEDQ) are disordered. Intrachain disulfides connect Cys-139-Cys-203, Cys-181-Cys-231, and Cys-191-Cys-233.

Belongs to the NGF-beta family. In terms of assembly, homodimer; non-covalently linked. As to expression, expressed by the venom gland.

It is found in the secreted. Functionally, nerve growth factor is important for the development and maintenance of the sympathetic and sensory nervous systems. It stimulates division and differentiation of sympathetic and embryonic sensory neurons as well as basal forebrain cholinergic neurons in the brain. Its relevance in the snake venom is not clear. However, it has been shown to inhibit metalloproteinase-dependent proteolysis of platelet glycoprotein Ib alpha, suggesting a metalloproteinase inhibition to prevent metalloprotease autodigestion and/or protection against prey proteases. Binds a lipid between the two protein chains in the homodimer. The lipid-bound form promotes histamine relase from mouse mast cells, contrary to the lipid-free form. The sequence is that of Venom nerve growth factor 2 from Naja sputatrix (Malayan spitting cobra).